We begin with the raw amino-acid sequence, 105 residues long: Heat shock protein HspQ (105 aa).

Positions 75–105 are disordered; the sequence is GEMQEEHPEQPSMDELARSIRQQLQAPRLRN.

It belongs to the HspQ family.

The protein localises to the cytoplasm. Involved in the degradation of certain denaturated proteins, including DnaA, during heat shock stress. In Cronobacter sakazakii (strain ATCC BAA-894) (Enterobacter sakazakii), this protein is Heat shock protein HspQ.